A 578-amino-acid chain; its full sequence is Putative ankyrin repeat protein FPV022 (578 aa).

11 ANK repeats span residues 4–34 (RRKS…DLNK), 38–67 (KNRT…KMSA), 68–97 (CKVP…SVDV), 100–129 (KGET…SGPY), 160–189 (YGHT…ITDN), 222–251 (EGTT…DPKV), 255–287 (HSVS…MVNM), 320–349 (YLSE…NINK), 353–382 (YGNI…DVNA), 386–415 (DGNT…DINS), and 419–449 (NGRT…KKNK).

This Fowlpox virus (strain NVSL) (FPV) protein is Putative ankyrin repeat protein FPV022.